The sequence spans 191 residues: Ankyrin repeat domain-containing protein 22 (191 aa).

ANK repeat units follow at residues 39–68 (NGDT…DVNL), 72–100 (KERT…MPVL), 101–130 (LIGY…EVNA), and 134–163 (DGYT…DPMI).

The chain is Ankyrin repeat domain-containing protein 22 (Ankrd22) from Mus musculus (Mouse).